Consider the following 369-residue polypeptide: Endophilin-A (369 aa).

The BAR domain occupies 18-248; that stretch reads TEKMGGAEGT…LQEKRAEAES (231 aa). A coiled-coil region spans residues 227 to 249; sequence QCADVLRGLQETLQEKRAEAESR. The span at 275–294 shows a compositional bias: low complexity; it reads GTPSHISSSASPLPSPMRSP. Positions 275–297 are disordered; that stretch reads GTPSHISSSASPLPSPMRSPAKS. One can recognise an SH3 domain in the interval 305 to 364; the sequence is QQQPCCQALYDFDPENPGELGFKENDIITLLNRVDDNWYEGAVNGRTGYFPQSYVQVQVP.

It belongs to the endophilin family.

Its subcellular location is the cytoplasm. The protein resides in the membrane. Its function is as follows. Required presynaptically at the neuromuscular junction. Implicated in synaptic vesicle endocytosis. This is Endophilin-A from Drosophila virilis (Fruit fly).